The chain runs to 165 residues: Interferon gamma (165 aa).

Residues 1–23 (MKYTSYILAFQLCIVLGSLGCYC) form the signal peptide. Residue glutamine 24 is modified to Pyrrolidone carboxylic acid. N-linked (GlcNAc...) asparagine glycans are attached at residues asparagine 48 and asparagine 120.

It belongs to the type II (or gamma) interferon family. In terms of assembly, homodimer. Interacts with IFNGR1 (via extracellular domain); this interaction promotes IFNGR1 dimerization. Released primarily from activated T lymphocytes.

Its subcellular location is the secreted. In terms of biological role, type II interferon produced by immune cells such as T-cells and NK cells that plays crucial roles in antimicrobial, antiviral, and antitumor responses by activating effector immune cells and enhancing antigen presentation. Primarily signals through the JAK-STAT pathway after interaction with its receptor IFNGR1 to affect gene regulation. Upon IFNG binding, IFNGR1 intracellular domain opens out to allow association of downstream signaling components JAK2, JAK1 and STAT1, leading to STAT1 activation, nuclear translocation and transcription of IFNG-regulated genes. Many of the induced genes are transcription factors such as IRF1 that are able to further drive regulation of a next wave of transcription. Plays a role in class I antigen presentation pathway by inducing a replacement of catalytic proteasome subunits with immunoproteasome subunits. In turn, increases the quantity, quality, and repertoire of peptides for class I MHC loading. Increases the efficiency of peptide generation also by inducing the expression of activator PA28 that associates with the proteasome and alters its proteolytic cleavage preference. Up-regulates as well MHC II complexes on the cell surface by promoting expression of several key molecules such as cathepsins B/CTSB, H/CTSH, and L/CTSL. Participates in the regulation of hematopoietic stem cells during development and under homeostatic conditions by affecting their development, quiescence, and differentiation. The sequence is that of Interferon gamma (IFNG) from Cercocebus atys (Sooty mangabey).